We begin with the raw amino-acid sequence, 1258 residues long: Regulator of G-protein signaling 22 (1258 aa).

The disordered stretch occupies residues 581–604 (QQLGRSEPLNAVSSKDGGLEKGSK). RGS domains are found at residues 845-973 (TFTD…ASRQ) and 1014-1138 (AFRK…TDEK). A disordered region spans residues 1145–1172 (RRQEHKQKRKASDTEEDKAGKSGVKQYA). Positions 1154-1164 (KASDTEEDKAG) are enriched in basic and acidic residues.

In terms of assembly, interacts with GNA11, GNA12 and GNA13. As to expression, expressed testis, including in Leydig cells and spermatogenic cells from the spermatogonia to spermatid stages (at protein level).

Its subcellular location is the cytoplasm. The protein localises to the nucleus. Its function is as follows. Inhibits signal transduction by increasing the GTPase activity of G protein alpha subunits thereby driving them into their inactive GDP-bound form. This is Regulator of G-protein signaling 22 (Rgs22) from Mus musculus (Mouse).